Here is a 204-residue protein sequence, read N- to C-terminus: High frequency lysogenization protein HflD homolog (204 aa).

Belongs to the HflD family.

The protein resides in the cytoplasm. The protein localises to the cell inner membrane. The chain is High frequency lysogenization protein HflD homolog from Stenotrophomonas maltophilia (strain K279a).